Consider the following 458-residue polypeptide: Cysteine--tRNA ligase (458 aa).

Residue cysteine 27 coordinates Zn(2+). The 'HIGH' region motif lies at 29–39 (ITPQSEPHIGH). Residues cysteine 207, histidine 232, and glutamate 236 each contribute to the Zn(2+) site. Positions 265–269 (KMSKS) match the 'KMSKS' region motif. Lysine 268 is a binding site for ATP.

The protein belongs to the class-I aminoacyl-tRNA synthetase family. Monomer. Zn(2+) is required as a cofactor.

The protein resides in the cytoplasm. It carries out the reaction tRNA(Cys) + L-cysteine + ATP = L-cysteinyl-tRNA(Cys) + AMP + diphosphate. This chain is Cysteine--tRNA ligase, found in Dehalococcoides mccartyi (strain ATCC BAA-2266 / KCTC 15142 / 195) (Dehalococcoides ethenogenes (strain 195)).